A 127-amino-acid polypeptide reads, in one-letter code: Small ribosomal subunit protein uS13 (127 aa).

The interval 100–127 (GQRTRTNARTRKGVRKTVAGKKKAPAKK) is disordered. Residues 101 to 127 (QRTRTNARTRKGVRKTVAGKKKAPAKK) show a composition bias toward basic residues.

It belongs to the universal ribosomal protein uS13 family. As to quaternary structure, part of the 30S ribosomal subunit. Forms a loose heterodimer with protein S19. Forms two bridges to the 50S subunit in the 70S ribosome.

Functionally, located at the top of the head of the 30S subunit, it contacts several helices of the 16S rRNA. In the 70S ribosome it contacts the 23S rRNA (bridge B1a) and protein L5 of the 50S subunit (bridge B1b), connecting the 2 subunits; these bridges are implicated in subunit movement. Contacts the tRNAs in the A and P-sites. In Synechococcus sp. (strain JA-3-3Ab) (Cyanobacteria bacterium Yellowstone A-Prime), this protein is Small ribosomal subunit protein uS13.